Reading from the N-terminus, the 240-residue chain is Putative peptidoglycan hydrolase Rv2525c (240 aa).

Residues 1 to 33 (MSVSRRDVLKFAAATPGVLGLGVVASSLRAAPA) constitute a signal peptide (tat-type signal).

Predicted to be exported by the Tat system. The position of the signal peptide cleavage has not been experimentally proven.

It localises to the secreted. It carries out the reaction Hydrolysis of (1-&gt;4)-beta-linkages between N-acetylmuramic acid and N-acetyl-D-glucosamine residues in a peptidoglycan and between N-acetyl-D-glucosamine residues in chitodextrins.. It participates in cell wall degradation; peptidoglycan degradation. Functionally, may function as a peptidoglycan hydrolase with glycosidase activity. In vitro, displays esterase activity toward p-nitrophenyl esters of various acyl chain length (C4 to C16), with a preference for p-nitrophenyl butyrate (C4). The sequence is that of Putative peptidoglycan hydrolase Rv2525c from Mycobacterium tuberculosis (strain ATCC 25618 / H37Rv).